The chain runs to 679 residues: Methionine--tRNA ligase (679 aa).

The 'HIGH' region motif lies at 14 to 24 (PYANGSIHLGH). Zn(2+) is bound by residues Cys145, Cys148, Cys158, and Cys161. A 'KMSKS' region motif is present at residues 331 to 335 (KMSKS). Residue Lys334 participates in ATP binding. One can recognise a tRNA-binding domain in the interval 577–679 (TFAAVDLRVA…SGAKPGQRIK (103 aa)).

Belongs to the class-I aminoacyl-tRNA synthetase family. MetG type 1 subfamily. As to quaternary structure, homodimer. The cofactor is Zn(2+).

It is found in the cytoplasm. It catalyses the reaction tRNA(Met) + L-methionine + ATP = L-methionyl-tRNA(Met) + AMP + diphosphate. Is required not only for elongation of protein synthesis but also for the initiation of all mRNA translation through initiator tRNA(fMet) aminoacylation. The protein is Methionine--tRNA ligase of Pseudomonas putida (strain GB-1).